Here is a 475-residue protein sequence, read N- to C-terminus: MSPRPEIKAGVGFKAGVKDYRLTYYTPDYQTKDTDILAAFRMTPQPGVPAEECGAAVAAESSTGTWTTVWTDGLTSLDRYKGRCYAIEPVAGEENQYIAYVAYPLDLFEEGSVTNLFTSIVGNVFGFKALRALRLEDLRIPPAYSKTFQGPPHGIQVERDKLNKYGRPLLGCTIKPKLGLSAKNYGRAVYECLRGGLDFTKDDENVNSQPFMRWRDRFLFCAEAIYKSQGETGEIKGHYLNATAGTCEEMIKRAQFARELGMPIVMHDYLTGGFTANTSLAHYCRDNGLLLHIHRAMHAVLDRQKNHGMHFRVLAKALRLSGGDHIHSGTVVGKLEGERQVTLGFVDLLRDDYIEKDRSRGIYFTQDWVSLPGVLPVASGGIHVWHMPALTEIFGDDSVLQFGGGTLGHPWGNAPGAVANRVALEACVQARNEGRDLAREGNEIIREAAKWSPELAAACEVWKEIKFEFDTVDTL.

The propeptide occupies 1-2 (MS). Residue Pro3 is modified to N-acetylproline. The residue at position 14 (Lys14) is an N6,N6,N6-trimethyllysine. Positions 123 and 173 each coordinate substrate. The Proton acceptor role is filled by Lys175. Residue Lys177 coordinates substrate. Mg(2+) contacts are provided by Lys201, Asp203, and Glu204. Residue Lys201 is modified to N6-carboxylysine. His294 functions as the Proton acceptor in the catalytic mechanism. Substrate is bound by residues Arg295, His327, and Ser379.

The protein belongs to the RuBisCO large chain family. Type I subfamily. In terms of assembly, heterohexadecamer of 8 large chains and 8 small chains; disulfide-linked. The disulfide link is formed within the large subunit homodimers. It depends on Mg(2+) as a cofactor. The disulfide bond which can form in the large chain dimeric partners within the hexadecamer appears to be associated with oxidative stress and protein turnover.

The protein resides in the plastid. It localises to the chloroplast. It catalyses the reaction 2 (2R)-3-phosphoglycerate + 2 H(+) = D-ribulose 1,5-bisphosphate + CO2 + H2O. The enzyme catalyses D-ribulose 1,5-bisphosphate + O2 = 2-phosphoglycolate + (2R)-3-phosphoglycerate + 2 H(+). In terms of biological role, ruBisCO catalyzes two reactions: the carboxylation of D-ribulose 1,5-bisphosphate, the primary event in carbon dioxide fixation, as well as the oxidative fragmentation of the pentose substrate in the photorespiration process. Both reactions occur simultaneously and in competition at the same active site. This is Ribulose bisphosphate carboxylase large chain from Physcomitrium patens (Spreading-leaved earth moss).